A 797-amino-acid polypeptide reads, in one-letter code: Interphotoreceptor matrix proteoglycan 1 (797 aa).

The signal sequence occupies residues 1–20; sequence MYLETRRAIFVFWIFLQVQG. N-linked (GlcNAc...) asparagine glycosylation is found at Asn42, Asn143, Asn191, and Asn215. Positions 232–354 constitute an SEA 1 domain; the sequence is EEQRVELSVS…QPEIYLTATD (123 aa). Thr403, Thr421, Thr432, and Thr442 each carry an O-linked (GalNAc...) threonine glycan. The SEA 2 domain maps to 571–684; the sequence is RELVVFFSLR…YSLNIEPADQ (114 aa). N-linked (GlcNAc...) asparagine glycosylation is found at Asn592 and Asn616. The short motif at 621–629 is the Heparin- and hyaluronan-binding element; that stretch reads KQLEILNFR. N-linked (GlcNAc...) asparagine glycans are attached at residues Asn630 and Asn648.

In terms of processing, the N-terminus is blocked. Highly glycosylated (N- and O-linked carbohydrates and sialic acid). As to expression, expressed in the retina (at protein level). In the retina, specifically expressed by cone and rod photoreceptor cells. Localizes to cone and rod photoreceptor cells surrounding the interphotoreceptor matrix of the retina.

It localises to the cell projection. The protein localises to the cilium. The protein resides in the photoreceptor outer segment. Its subcellular location is the secreted. It is found in the extracellular space. It localises to the extracellular matrix. The protein localises to the interphotoreceptor matrix. The protein resides in the photoreceptor inner segment. Functionally, chondroitin sulfate-, heparin- and hyaluronan-binding protein. May serve to form a basic macromolecular scaffold comprising the insoluble interphotoreceptor matrix. This chain is Interphotoreceptor matrix proteoglycan 1, found in Homo sapiens (Human).